The chain runs to 257 residues: Transcription factor MYB3 (257 aa).

HTH myb-type domains are found at residues 9–61 and 62–116; these read KAHM…MNYL and RPDL…KRKL. 2 consecutive DNA-binding regions (H-T-H motif) follow at residues 37–61 and 89–112; these read WRSL…MNYL and WSLI…NTHI. The Required for interaction with CPL1 motif lies at 189-193; that stretch reads LNLEL.

Interacts with CPL1. Expressed in roots, stems, leaves, flowers and siliques.

It localises to the nucleus. This is Transcription factor MYB3 (MYB3) from Arabidopsis thaliana (Mouse-ear cress).